Consider the following 257-residue polypeptide: Indole-3-glycerol phosphate synthase (257 aa).

It belongs to the TrpC family.

It catalyses the reaction 1-(2-carboxyphenylamino)-1-deoxy-D-ribulose 5-phosphate + H(+) = (1S,2R)-1-C-(indol-3-yl)glycerol 3-phosphate + CO2 + H2O. Its pathway is amino-acid biosynthesis; L-tryptophan biosynthesis; L-tryptophan from chorismate: step 4/5. This chain is Indole-3-glycerol phosphate synthase, found in Halalkalibacterium halodurans (strain ATCC BAA-125 / DSM 18197 / FERM 7344 / JCM 9153 / C-125) (Bacillus halodurans).